We begin with the raw amino-acid sequence, 417 residues long: Phosphoglycerate kinase (417 aa).

(2R)-3-phosphoglycerate contacts are provided by valine 23, aspartate 24, phenylalanine 25, asparagine 26, glutamine 39, arginine 40, serine 63, histidine 64, glycine 66, arginine 67, leucine 122, arginine 123, histidine 170, and arginine 171. Position 214 (glycine 214) interacts with ADP. Residue glycine 214 coordinates CDP. Residues alanine 215 and lysine 216 each coordinate AMP. Alanine 215 contributes to the ATP binding site. Position 215 (alanine 215) interacts with Mg(2+). Aspartate 219 contacts CDP. Residue aspartate 219 coordinates Mg(2+). Lysine 220 serves as a coordination point for AMP. Residue lysine 220 participates in ATP binding. An ADP-binding site is contributed by glycine 238. Glycine 238 lines the CDP pocket. Alanine 239 and glycine 313 together coordinate AMP. The ATP site is built by alanine 239 and glycine 313. The CDP site is built by glycine 338 and phenylalanine 343. Phenylalanine 343 contacts ADP. Glutamate 344 contacts AMP. ATP contacts are provided by glutamate 344, aspartate 375, and threonine 376. Aspartate 375 serves as a coordination point for Mg(2+).

It belongs to the phosphoglycerate kinase family. In terms of assembly, monomer. It depends on Mg(2+) as a cofactor.

Its subcellular location is the cytoplasm. The protein localises to the mitochondrion. The catalysed reaction is (2R)-3-phosphoglycerate + ATP = (2R)-3-phospho-glyceroyl phosphate + ADP. It participates in carbohydrate degradation; glycolysis; pyruvate from D-glyceraldehyde 3-phosphate: step 2/5. Its function is as follows. Catalyzes one of the two ATP producing reactions in the glycolytic pathway via the reversible conversion of 1,3-diphosphoglycerate to 3-phosphoglycerate. Both L- and D- forms of purine and pyrimidine nucleotides can be used as substrates, but the activity is much lower on pyrimidines. Negatively regulates the biosynthesis of acetyl-CoA from pyruvate in the mitochondrion. This chain is Phosphoglycerate kinase (pgkA), found in Aspergillus oryzae (strain ATCC 42149 / RIB 40) (Yellow koji mold).